We begin with the raw amino-acid sequence, 233 residues long: Large ribosomal subunit protein uL1 (233 aa).

It belongs to the universal ribosomal protein uL1 family. As to quaternary structure, part of the 50S ribosomal subunit.

In terms of biological role, binds directly to 23S rRNA. The L1 stalk is quite mobile in the ribosome, and is involved in E site tRNA release. Protein L1 is also a translational repressor protein, it controls the translation of the L11 operon by binding to its mRNA. In Brucella melitensis biotype 1 (strain ATCC 23456 / CCUG 17765 / NCTC 10094 / 16M), this protein is Large ribosomal subunit protein uL1.